The following is a 367-amino-acid chain: Quinolinate synthase (367 aa).

Residues His-46 and Ser-63 each coordinate iminosuccinate. Cys-110 lines the [4Fe-4S] cluster pocket. Residues 141-143 (YVN) and Ser-162 contribute to the iminosuccinate site. Cys-229 is a binding site for [4Fe-4S] cluster. Iminosuccinate is bound by residues 255–257 (HPE) and Thr-272. Cys-319 contacts [4Fe-4S] cluster.

Belongs to the quinolinate synthase family. Type 3 subfamily. Requires [4Fe-4S] cluster as cofactor.

It localises to the cytoplasm. It carries out the reaction iminosuccinate + dihydroxyacetone phosphate = quinolinate + phosphate + 2 H2O + H(+). The protein operates within cofactor biosynthesis; NAD(+) biosynthesis; quinolinate from iminoaspartate: step 1/1. In terms of biological role, catalyzes the condensation of iminoaspartate with dihydroxyacetone phosphate to form quinolinate. The protein is Quinolinate synthase of Bacillus velezensis (strain DSM 23117 / BGSC 10A6 / LMG 26770 / FZB42) (Bacillus amyloliquefaciens subsp. plantarum).